The sequence spans 49 residues: Small ribosomal subunit protein eS31 (49 aa).

Zn(2+)-binding residues include C21, C24, C39, and C42. The C4-type zinc finger occupies 21-42 (CPRCGPGTFLADHKNRLTCGKC).

The protein belongs to the eukaryotic ribosomal protein eS31 family. As to quaternary structure, part of the 30S ribosomal subunit. Zn(2+) is required as a cofactor.

The polypeptide is Small ribosomal subunit protein eS31 (Methanosarcina barkeri (strain Fusaro / DSM 804)).